The following is a 140-amino-acid chain: Methylglyoxal synthase (140 aa).

In terms of domain architecture, MGS-like spans 1–140 (MKIALIAHDR…HDQDSNPINL (140 aa)). Substrate is bound by residues histidine 8, lysine 12, 34 to 37 (TGTT), and 54 to 55 (SG). Aspartate 60 serves as the catalytic Proton donor/acceptor. Histidine 87 is a substrate binding site.

It belongs to the methylglyoxal synthase family.

It catalyses the reaction dihydroxyacetone phosphate = methylglyoxal + phosphate. Its function is as follows. Catalyzes the formation of methylglyoxal from dihydroxyacetone phosphate. The chain is Methylglyoxal synthase from Latilactobacillus sakei subsp. sakei (strain 23K) (Lactobacillus sakei subsp. sakei).